We begin with the raw amino-acid sequence, 851 residues long: Protein BCK2 (851 aa).

Positions 1-10 are enriched in basic residues; the sequence is MPKNSHHHRS. Disordered stretches follow at residues 1 to 91, 233 to 271, 315 to 355, 466 to 504, and 698 to 722; these read MPKN…RKKS, EVVP…MNTK, SLSL…LPEE, FLDG…YITT, and HASR…PNNV. The span at 11–23 shows a compositional bias: low complexity; the sequence is SSVNSTKSRSTES. The segment covering 37 to 66 has biased composition (polar residues); the sequence is ASGSTQASPDRNSSTGSCSTPVLPTMNVMS. A compositionally biased stretch (basic and acidic residues) spans 71-81; that stretch reads VLLEDPRDNHT. Composition is skewed to polar residues over residues 254–271, 334–349, 489–504, and 702–722; these read SETN…MNTK, SPRT…SQSK, ISDA…YITT, and SESN…PNNV. Ser334 is subject to Phosphoserine. 2 positions are modified to phosphoserine: Ser757 and Ser761.

Functionally, dosage dependent suppressor of PKC1 deletion and MPK1 deletion. Involved in cell lysis. This is Protein BCK2 (BCK2) from Saccharomyces cerevisiae (strain ATCC 204508 / S288c) (Baker's yeast).